A 646-amino-acid chain; its full sequence is 1-deoxy-D-xylulose-5-phosphate synthase (646 aa).

Residues His86 and 127–129 (AHS) contribute to the thiamine diphosphate site. Residue Asp158 coordinates Mg(2+). Thiamine diphosphate contacts are provided by residues 159–160 (GA), Asn188, Tyr295, and Glu377. Asn188 contributes to the Mg(2+) binding site.

It belongs to the transketolase family. DXPS subfamily. In terms of assembly, homodimer. Requires Mg(2+) as cofactor. It depends on thiamine diphosphate as a cofactor.

The catalysed reaction is D-glyceraldehyde 3-phosphate + pyruvate + H(+) = 1-deoxy-D-xylulose 5-phosphate + CO2. Its pathway is metabolic intermediate biosynthesis; 1-deoxy-D-xylulose 5-phosphate biosynthesis; 1-deoxy-D-xylulose 5-phosphate from D-glyceraldehyde 3-phosphate and pyruvate: step 1/1. In terms of biological role, catalyzes the acyloin condensation reaction between C atoms 2 and 3 of pyruvate and glyceraldehyde 3-phosphate to yield 1-deoxy-D-xylulose-5-phosphate (DXP). This chain is 1-deoxy-D-xylulose-5-phosphate synthase, found in Burkholderia cenocepacia (strain HI2424).